We begin with the raw amino-acid sequence, 292 residues long: Alpha-soluble NSF attachment protein (292 aa).

Ser-2 is modified (N-acetylserine). Lys-261 is covalently cross-linked (Glycyl lysine isopeptide (Lys-Gly) (interchain with G-Cter in ubiquitin)).

It belongs to the SNAP family. In terms of assembly, binds to vacuolar cis-SNARE complexes composed of the v-SNAREs NYV1, VTI1 and YKT6, and the t-SNAREs VAM3 and VAM7. Interacts with SEC18.

The protein localises to the membrane. Its function is as follows. SNARE complex protein that binds to cis-SNARE complexes on membranes and is required for vesicular transport between the endoplasmic reticulum and the Golgi apparatus and for homotypic vacuole fusion. During the priming step of membrane fusion, is released from cis-SNARE complexes by SEC18 to establish a pool of unpaired SNAREs, which are required for interactions in trans during docking and fusion steps. Can displace HOPS from SNARE complexes, which may be a prerequisite for trans-SNARE complex disassembly and subsequent rounds of priming, docking and fusion. The polypeptide is Alpha-soluble NSF attachment protein (SEC17) (Saccharomyces cerevisiae (strain ATCC 204508 / S288c) (Baker's yeast)).